The primary structure comprises 201 residues: 3-isopropylmalate dehydratase small subunit (201 aa).

This sequence belongs to the LeuD family. LeuD type 1 subfamily. Heterodimer of LeuC and LeuD.

It carries out the reaction (2R,3S)-3-isopropylmalate = (2S)-2-isopropylmalate. The protein operates within amino-acid biosynthesis; L-leucine biosynthesis; L-leucine from 3-methyl-2-oxobutanoate: step 2/4. Catalyzes the isomerization between 2-isopropylmalate and 3-isopropylmalate, via the formation of 2-isopropylmaleate. The sequence is that of 3-isopropylmalate dehydratase small subunit from Rhizobium meliloti (strain 1021) (Ensifer meliloti).